The sequence spans 383 residues: Chaperone protein DnaJ (383 aa).

The J domain maps to 4–68 (DLYETLNVSR…DQRARYDRFG (65 aa)). The CR-type zinc-finger motif lies at 139 to 221 (GGEKEITINH…CSGRGRNQKQ (83 aa)). The Zn(2+) site is built by cysteine 152, cysteine 155, cysteine 169, cysteine 172, cysteine 195, cysteine 198, cysteine 209, and cysteine 212. CXXCXGXG motif repeat units lie at residues 152-159 (CETCRGSG), 169-176 (CRNCGGQG), 195-202 (CPNCQGTG), and 209-216 (CPTCSGRG).

This sequence belongs to the DnaJ family. Homodimer. Requires Zn(2+) as cofactor.

Its subcellular location is the cytoplasm. Functionally, participates actively in the response to hyperosmotic and heat shock by preventing the aggregation of stress-denatured proteins and by disaggregating proteins, also in an autonomous, DnaK-independent fashion. Unfolded proteins bind initially to DnaJ; upon interaction with the DnaJ-bound protein, DnaK hydrolyzes its bound ATP, resulting in the formation of a stable complex. GrpE releases ADP from DnaK; ATP binding to DnaK triggers the release of the substrate protein, thus completing the reaction cycle. Several rounds of ATP-dependent interactions between DnaJ, DnaK and GrpE are required for fully efficient folding. Also involved, together with DnaK and GrpE, in the DNA replication of plasmids through activation of initiation proteins. This chain is Chaperone protein DnaJ, found in Gloeobacter violaceus (strain ATCC 29082 / PCC 7421).